Consider the following 212-residue polypeptide: HTH-type transcriptional regulatory protein RaaS (212 aa).

Residues 6–65 (LTAHARIREAAIEQFGRHGFGVGLRAIAEAAGVSAALVIHHFGSKEGLRKACDDFVAEEI) form the HTH tetR-type domain. Residues 28–47 (GLRAIAEAAGVSAALVIHHF) constitute a DNA-binding region (H-T-H motif).

In terms of assembly, homodimer. Interacts with long chain acyl-CoA derivatives. Interacts with several drugs such rhodamine 6G, ethidium and safranin O.

Interaction with long chain acyl-CoA derivatives (oleoyl-CoA and, to lesser extent, stearoyl-CoA) prevents binding to DNA, leading to the expression of the target genes. Long chain acyl-CoA derivatives may serve as biological indicators of the bacterial metabolic state. Functionally, regulates the expression of the Rv1217c-Rv1218c multidrug efflux system and its own expression. Acts by binding to promoter regions of Rv1219c and upstream of the Rv1218c gene. Important for survival in prolonged stationary phase and during macrophage infection. May be used to eliminate non-growing mycobacteria. The chain is HTH-type transcriptional regulatory protein RaaS from Mycobacterium tuberculosis (strain ATCC 25618 / H37Rv).